The sequence spans 465 residues: Argininosuccinate lyase (465 aa).

It belongs to the lyase 1 family. Argininosuccinate lyase subfamily.

The protein localises to the cytoplasm. It catalyses the reaction 2-(N(omega)-L-arginino)succinate = fumarate + L-arginine. It participates in amino-acid biosynthesis; L-arginine biosynthesis; L-arginine from L-ornithine and carbamoyl phosphate: step 3/3. In Bradyrhizobium diazoefficiens (strain JCM 10833 / BCRC 13528 / IAM 13628 / NBRC 14792 / USDA 110), this protein is Argininosuccinate lyase.